A 283-amino-acid polypeptide reads, in one-letter code: Tetraspanin-33 (283 aa).

Over 1-24 (MARRPGAPAAYGEDFSFVSPLVKY) the chain is Cytoplasmic. A helical transmembrane segment spans residues 25–45 (LLFFFNMLFWVISMVMVAVGV). Topologically, residues 46 to 64 (YARLMKHEEAALACLAVDP) are extracellular. Residues 65–85 (AILLIVVGILMFLLTFCGCIG) traverse the membrane as a helical segment. Residues 86 to 96 (SLRENICLLQT) lie on the Cytoplasmic side of the membrane. A helical membrane pass occupies residues 97 to 117 (FSLCLTVVFLLQLAAGVLGFV). Topologically, residues 118–235 (FSDKVRGKVS…DRLVNWIHSN (118 aa)) are extracellular. Disulfide bonds link Cys-156-Cys-224, Cys-157-Cys-189, Cys-173-Cys-183, and Cys-190-Cys-203. Asn-172 carries an N-linked (GlcNAc...) asparagine glycan. A helical transmembrane segment spans residues 236-256 (LFVLGGVALGLAIPQLVGIML). The Cytoplasmic portion of the chain corresponds to 257–283 (SMILVSQIKDQIKLQLYNQQHRADPWY).

This sequence belongs to the tetraspanin (TM4SF) family. In terms of assembly, homodimer; disulfide-linked. Interacts (via extracellular domain) with ADAM10 (via extracellular domain). Interacts (via cytoplasmic domain) with PLEKHA7 (via WW domains); the interaction is dependent on PDZD11 being bound to PLEKHA7 and facilitates the docking of ADAM10 to zonula adherens.

The protein resides in the cell membrane. The protein localises to the cell junction. It localises to the adherens junction. It is found in the cytoplasm. Part of TspanC8 subgroup, composed of 6 members that interact with the transmembrane metalloprotease ADAM10. This interaction is required for ADAM10 exit from the endoplasmic reticulum and for enzymatic maturation and trafficking to the cell surface as well as substrate specificity. Different TspanC8/ADAM10 complexes have distinct substrates. Plays an important role in normal erythropoiesis. It has a role in the differentiation of erythroid progenitors. Negatively regulates ligand-induced Notch activity probably by regulating ADAM10 activity. Mediates docking of ADAM10 to zonula adherens by interacting with ADAM10 and, in a PDZD11-dependent manner, with the zonula adherens protein PLEKHA7. The chain is Tetraspanin-33 (TSPAN33) from Bos taurus (Bovine).